Here is a 489-residue protein sequence, read N- to C-terminus: Mitochondrial-processing peptidase subunit beta (489 aa).

Residues 1–45 constitute a mitochondrion transit peptide; the sequence is MAAAAVSRTLLPVAGRRLWGFTRRLPLRAAAAQPLYFGGDRLRST. Histidine 101 lines the Zn(2+) pocket. Glutamate 104 acts as the Proton acceptor in catalysis. Zn(2+) is bound by residues histidine 105 and glutamate 181.

The protein belongs to the peptidase M16 family. In terms of assembly, heterodimer of PMPCA (alpha) and PMPCB (beta) subunits, forming the mitochondrial processing protease (MPP) in which PMPCA is involved in substrate recognition and binding and PMPCB is the catalytic subunit. The cofactor is Zn(2+).

It is found in the mitochondrion matrix. The catalysed reaction is Release of N-terminal transit peptides from precursor proteins imported into the mitochondrion, typically with Arg in position P2.. Binding to PMPCA is required for catalytic activity. Catalytic subunit of the essential mitochondrial processing protease (MPP), which cleaves the mitochondrial sequence off newly imported precursors proteins. Preferentially, cleaves after an arginine at position P2. Required for PINK1 turnover by coupling PINK1 mitochondrial import and cleavage, which results in subsequent PINK1 proteolysis. The sequence is that of Mitochondrial-processing peptidase subunit beta (Pmpcb) from Rattus norvegicus (Rat).